A 207-amino-acid chain; its full sequence is Large ribosomal subunit protein bL25 (207 aa).

It belongs to the bacterial ribosomal protein bL25 family. CTC subfamily. As to quaternary structure, part of the 50S ribosomal subunit; part of the 5S rRNA/L5/L18/L25 subcomplex. Contacts the 5S rRNA. Binds to the 5S rRNA independently of L5 and L18.

Functionally, this is one of the proteins that binds to the 5S RNA in the ribosome where it forms part of the central protuberance. In Brucella canis (strain ATCC 23365 / NCTC 10854 / RM-666), this protein is Large ribosomal subunit protein bL25.